Reading from the N-terminus, the 394-residue chain is Dual-specificity RNA methyltransferase RlmN (394 aa).

Glu116 (proton acceptor) is an active-site residue. One can recognise a Radical SAM core domain in the interval 122 to 365 (EEDRGTLCVS…SPIRTPRGED (244 aa)). Cys129 and Cys370 are oxidised to a cystine. [4Fe-4S] cluster-binding residues include Cys136, Cys140, and Cys143. Residues 196-197 (GE), Ser228, 250-252 (SFH), and Asn327 each bind S-adenosyl-L-methionine. Cys370 acts as the S-methylcysteine intermediate in catalysis.

The protein belongs to the radical SAM superfamily. RlmN family. Requires [4Fe-4S] cluster as cofactor.

It localises to the cytoplasm. The catalysed reaction is adenosine(2503) in 23S rRNA + 2 reduced [2Fe-2S]-[ferredoxin] + 2 S-adenosyl-L-methionine = 2-methyladenosine(2503) in 23S rRNA + 5'-deoxyadenosine + L-methionine + 2 oxidized [2Fe-2S]-[ferredoxin] + S-adenosyl-L-homocysteine. It catalyses the reaction adenosine(37) in tRNA + 2 reduced [2Fe-2S]-[ferredoxin] + 2 S-adenosyl-L-methionine = 2-methyladenosine(37) in tRNA + 5'-deoxyadenosine + L-methionine + 2 oxidized [2Fe-2S]-[ferredoxin] + S-adenosyl-L-homocysteine. Specifically methylates position 2 of adenine 2503 in 23S rRNA and position 2 of adenine 37 in tRNAs. m2A2503 modification seems to play a crucial role in the proofreading step occurring at the peptidyl transferase center and thus would serve to optimize ribosomal fidelity. The protein is Dual-specificity RNA methyltransferase RlmN of Dinoroseobacter shibae (strain DSM 16493 / NCIMB 14021 / DFL 12).